Here is a 242-residue protein sequence, read N- to C-terminus: Small ribosomal subunit protein uS2 (242 aa).

The protein belongs to the universal ribosomal protein uS2 family.

This Shewanella piezotolerans (strain WP3 / JCM 13877) protein is Small ribosomal subunit protein uS2.